The sequence spans 97 residues: Protein YukE (97 aa).

Positions 21–94 (VESQEVLNQV…ESTDQDIANQ (74 aa)) form a coiled coil.

Belongs to the WXG100 family. sagEsxA-like subfamily. As to quaternary structure, homodimer.

The protein localises to the secreted. Its function is as follows. Required to deliver LXG toxins to target cells. This Bacillus subtilis (strain 168) protein is Protein YukE (yukE).